Consider the following 685-residue polypeptide: Methionine--tRNA ligase (685 aa).

The short motif at 15–25 (PYANGPIHLGH) is the 'HIGH' region element. The Zn(2+) site is built by Cys146, Cys149, Cys159, and Cys162. Residues 331–335 (KMSKS) carry the 'KMSKS' region motif. Residue Lys334 coordinates ATP. The region spanning 583-685 (DFAKMDLRVA…AGVKAGSRVK (103 aa)) is the tRNA-binding domain.

This sequence belongs to the class-I aminoacyl-tRNA synthetase family. MetG type 1 subfamily. Homodimer. Zn(2+) serves as cofactor.

It localises to the cytoplasm. It carries out the reaction tRNA(Met) + L-methionine + ATP = L-methionyl-tRNA(Met) + AMP + diphosphate. Is required not only for elongation of protein synthesis but also for the initiation of all mRNA translation through initiator tRNA(fMet) aminoacylation. The polypeptide is Methionine--tRNA ligase (Actinobacillus succinogenes (strain ATCC 55618 / DSM 22257 / CCUG 43843 / 130Z)).